Consider the following 95-residue polypeptide: Aspartyl/glutamyl-tRNA(Asn/Gln) amidotransferase subunit C (95 aa).

This sequence belongs to the GatC family. In terms of assembly, heterotrimer of A, B and C subunits.

The catalysed reaction is L-glutamyl-tRNA(Gln) + L-glutamine + ATP + H2O = L-glutaminyl-tRNA(Gln) + L-glutamate + ADP + phosphate + H(+). It catalyses the reaction L-aspartyl-tRNA(Asn) + L-glutamine + ATP + H2O = L-asparaginyl-tRNA(Asn) + L-glutamate + ADP + phosphate + 2 H(+). Allows the formation of correctly charged Asn-tRNA(Asn) or Gln-tRNA(Gln) through the transamidation of misacylated Asp-tRNA(Asn) or Glu-tRNA(Gln) in organisms which lack either or both of asparaginyl-tRNA or glutaminyl-tRNA synthetases. The reaction takes place in the presence of glutamine and ATP through an activated phospho-Asp-tRNA(Asn) or phospho-Glu-tRNA(Gln). In Chlorobium limicola (strain DSM 245 / NBRC 103803 / 6330), this protein is Aspartyl/glutamyl-tRNA(Asn/Gln) amidotransferase subunit C.